A 448-amino-acid polypeptide reads, in one-letter code: Glucose-6-phosphate isomerase (448 aa).

Glutamate 290 serves as the catalytic Proton donor. Residues histidine 311 and lysine 425 contribute to the active site.

Belongs to the GPI family.

The protein resides in the cytoplasm. It carries out the reaction alpha-D-glucose 6-phosphate = beta-D-fructose 6-phosphate. The protein operates within carbohydrate biosynthesis; gluconeogenesis. It functions in the pathway carbohydrate degradation; glycolysis; D-glyceraldehyde 3-phosphate and glycerone phosphate from D-glucose: step 2/4. Catalyzes the reversible isomerization of glucose-6-phosphate to fructose-6-phosphate. The chain is Glucose-6-phosphate isomerase from Oceanobacillus iheyensis (strain DSM 14371 / CIP 107618 / JCM 11309 / KCTC 3954 / HTE831).